We begin with the raw amino-acid sequence, 578 residues long: Sulfite reductase [NADPH] hemoprotein beta-component (578 aa).

Cys-441, Cys-447, Cys-487, and Cys-491 together coordinate [4Fe-4S] cluster. Cys-491 provides a ligand contact to siroheme.

The protein belongs to the nitrite and sulfite reductase 4Fe-4S domain family. Alpha(8)-beta(8). The alpha component is a flavoprotein, the beta component is a hemoprotein. It depends on siroheme as a cofactor. Requires [4Fe-4S] cluster as cofactor.

The catalysed reaction is hydrogen sulfide + 3 NADP(+) + 3 H2O = sulfite + 3 NADPH + 4 H(+). The protein operates within sulfur metabolism; hydrogen sulfide biosynthesis; hydrogen sulfide from sulfite (NADPH route): step 1/1. Component of the sulfite reductase complex that catalyzes the 6-electron reduction of sulfite to sulfide. This is one of several activities required for the biosynthesis of L-cysteine from sulfate. This Vibrio parahaemolyticus serotype O3:K6 (strain RIMD 2210633) protein is Sulfite reductase [NADPH] hemoprotein beta-component.